We begin with the raw amino-acid sequence, 286 residues long: Bifunctional protein FolD (286 aa).

NADP(+)-binding positions include 166–168 (GAS) and isoleucine 232.

Belongs to the tetrahydrofolate dehydrogenase/cyclohydrolase family. In terms of assembly, homodimer.

It catalyses the reaction (6R)-5,10-methylene-5,6,7,8-tetrahydrofolate + NADP(+) = (6R)-5,10-methenyltetrahydrofolate + NADPH. It carries out the reaction (6R)-5,10-methenyltetrahydrofolate + H2O = (6R)-10-formyltetrahydrofolate + H(+). Its pathway is one-carbon metabolism; tetrahydrofolate interconversion. Functionally, catalyzes the oxidation of 5,10-methylenetetrahydrofolate to 5,10-methenyltetrahydrofolate and then the hydrolysis of 5,10-methenyltetrahydrofolate to 10-formyltetrahydrofolate. This Shewanella woodyi (strain ATCC 51908 / MS32) protein is Bifunctional protein FolD.